A 644-amino-acid chain; its full sequence is Probable potassium transport system protein Kup 2 (644 aa).

The tract at residues 1-21 (MSSDAAAVADRDGSSPGHGGH) is disordered. 12 helical membrane-spanning segments follow: residues 26-46 (LGAMVVGAVGVVFGDIGTSPL), 69-89 (VLSLIFWSMMLVVTFKYVAII), 120-140 (IILLGVFATALFYGDSMITPA), 155-175 (AGFAPMVLPIAVGILIALFMI), 183-203 (VGMLFGPIMMIYFTTLGVLGT), 231-251 (LAFLAMGSVVLAVTGAEALYA), 265-285 (WLVFVLPALMLNYLGQGAMIL), 312-332 (LVILATMATVIASQAVITGAF), 360-380 (IYIPAINWGLMVMVILLVMSF), 390-410 (YGIAVTGAMAIDTCLIAVVLI), 419-439 (LAAPLIAVFAAVDIAYFGANL), and 444-464 (DGGWFPLLIGFIAFTLLTTWG).

The protein belongs to the HAK/KUP transporter (TC 2.A.72) family.

Its subcellular location is the cell inner membrane. The catalysed reaction is K(+)(in) + H(+)(in) = K(+)(out) + H(+)(out). Transport of potassium into the cell. Likely operates as a K(+):H(+) symporter. This Rhizorhabdus wittichii (strain DSM 6014 / CCUG 31198 / JCM 15750 / NBRC 105917 / EY 4224 / RW1) (Sphingomonas wittichii) protein is Probable potassium transport system protein Kup 2.